A 252-amino-acid polypeptide reads, in one-letter code: Enolase-phosphatase E1 (252 aa).

2 residues coordinate Mg(2+): D18 and E20. Residues 149–150 and K184 contribute to the substrate site; that span reads SS. Residue D209 participates in Mg(2+) binding.

It belongs to the HAD-like hydrolase superfamily. MasA/MtnC family. As to quaternary structure, monomer. Mg(2+) serves as cofactor.

It localises to the cytoplasm. It is found in the nucleus. The catalysed reaction is 5-methylsulfanyl-2,3-dioxopentyl phosphate + H2O = 1,2-dihydroxy-5-(methylsulfanyl)pent-1-en-3-one + phosphate. It functions in the pathway amino-acid biosynthesis; L-methionine biosynthesis via salvage pathway; L-methionine from S-methyl-5-thio-alpha-D-ribose 1-phosphate: step 3/6. It participates in amino-acid biosynthesis; L-methionine biosynthesis via salvage pathway; L-methionine from S-methyl-5-thio-alpha-D-ribose 1-phosphate: step 4/6. Functionally, bifunctional enzyme that catalyzes the enolization of 2,3-diketo-5-methylthiopentyl-1-phosphate (DK-MTP-1-P) into the intermediate 2-hydroxy-3-keto-5-methylthiopentenyl-1-phosphate (HK-MTPenyl-1-P), which is then dephosphorylated to form the acireductone 1,2-dihydroxy-3-keto-5-methylthiopentene (DHK-MTPene). This is Enolase-phosphatase E1 from Naegleria gruberi (Amoeba).